A 231-amino-acid polypeptide reads, in one-letter code: 7-cyano-7-deazaguanine synthase (231 aa).

ATP is bound at residue 8-18 (FSGGQDSTTCL). The Zn(2+) site is built by cysteine 188, cysteine 197, cysteine 200, and cysteine 203.

It belongs to the QueC family. Requires Zn(2+) as cofactor.

The enzyme catalyses 7-carboxy-7-deazaguanine + NH4(+) + ATP = 7-cyano-7-deazaguanine + ADP + phosphate + H2O + H(+). Its pathway is purine metabolism; 7-cyano-7-deazaguanine biosynthesis. Functionally, catalyzes the ATP-dependent conversion of 7-carboxy-7-deazaguanine (CDG) to 7-cyano-7-deazaguanine (preQ(0)). This chain is 7-cyano-7-deazaguanine synthase, found in Salmonella choleraesuis (strain SC-B67).